The primary structure comprises 1441 residues: MALDIDTKNSSSAATGDANTVKANNNSSAASTGNKKTENLVNGNNNSAADGPAAKKKGKKNRNKSPPIATDAETTEAATTTAVTNGHEGEALVNGDAVAPDANANVAANDESESAEQQAAENAASSGELESEDVDLDALHDVGITVNISSPGADIISVQLSSMELVQEIHQLLMDREETCHRTCFSLQLGNNTLDNFAELKTVENLEQGSTIKVVEDPYTMREARIHVRHVRDLLKNLDPTDAYNGIDCTSLTYLNTITQGDLLDKKKTRPDSVDCTPPEYVTPGVKEPPLLPLHPNIKNAKGPQALKVLTTSAWNPPPGPRKLHGDLMYLYVVTMEEKRFHISACSKGFFINQSTDENFNPKPDNPSHLSHSLIDLLSTISPIFRRAFQTIQKRRTLRHAFERVATPYQVYQWASPQLEHTVDAIRAEDAFSSKLGYEEHIPGQTRDWNEELQTTRELPRKTLPERLMRERAIFKVHGDFVTAATRGAMAVIDGNVLAINPGEDSKMQMFIWNNIFFSLGFDVRDHYKELGGDHAAFVAPRYDLHGVRVYNAVDVEGLYTLGTVVIDYRGYRVTAQSIIPGILEREQEQSVVYGSIDFGKTVLSHPKYLELLRQAGKHLKILPHSVLNERDEPVELCSSVECKGIIGNDGRHYILDLLRTFPPDVNFLKLQDVKLSKELTEMGFPIEHRHKLCCLRQELLEAFIEDRYVSFIRIAAVHLQQLNAKKQDEAKEGTKEPASETEKESPPKAITEKEEEESKDQPTVGETKSAEAMVNAIREAQSNMATSNEVQAAEVVKRACAAVGSLKEKEFDFRFNPDVFSPGIRHVDGEEGTSSSIVKQKRLVQDAAEFLVLKQIPTFIKEHLAHSSPPIDGQTLTESLHNNGINVRYLGKVIKMLSQMPRMEYLYRIANLELIVRATKHIYYTYMQGTEPLHLSAAISHFLNCLLTNGPVNPAISKEEIHKKRTNTKYNKHKSSKSSGSGSKQSGQTSNQNGTSTSPSSSTASGGTSSNVAIDWTLVTPRSLWQQIRKEAKAYWDWDLECDAIDIALTKYGISRISLLRGFCQKVGIQVLLREYNFESKHKPTFGDDDIVNVFPVVKHISPRSTDAYNFYTTGQSKIQQGLFKEGYELISEALNLLNNVFGAMHQENGSCLRMLARLSYLLGDAQDALAIQQRAVIMSERVNGIDHPSTILEYTHLSLYSFANGHVGMSLKLLYRARYLLVLICGEDHPEVALIDSNISLILHALGEYELSLRFIEHALKLNLKYFGAKAMHVAVSYHLMARTQSCMGDFRSALNNEKETYTIYKSQLGEKHEKTRDSAECLRLLTQQAVLLQRKMNDIYSNGKLTSDLPPIHITPPSMGSVLDMLNTINGILFVQISQNDIVKVRSEIEKHLKANGEESEVNDAIKSIVDASGNNNGETEALINGGEESTVTVTATS.

2 disordered regions span residues 1–79 (MALD…EAAT) and 106–131 (VAAN…ELES). Residues 8–22 (KNSSSAATGDANTVK) are compositionally biased toward polar residues. The segment covering 54-63 (AKKKGKKNRN) has biased composition (basic residues). 2 stretches are compositionally biased toward low complexity: residues 64–79 (KSPP…EAAT) and 106–126 (VAAN…AASS). Serine 273 carries the phosphoserine modification. The 243-residue stretch at 427-669 (RAEDAFSSKL…RTFPPDVNFL (243 aa)) folds into the Clu domain. A compositionally biased stretch (basic and acidic residues) spans 726–753 (KKQDEAKEGTKEPASETEKESPPKAITE). Disordered stretches follow at residues 726–769 (KKQD…GETK) and 961–1009 (EIHK…SGGT). Positions 964–977 (KKRTNTKYNKHKSS) are enriched in basic residues. Residues 978 to 1009 (KSSGSGSKQSGQTSNQNGTSTSPSSSTASGGT) show a composition bias toward low complexity. TPR repeat units lie at residues 1109–1142 (AYNF…LNNV), 1235–1268 (ALID…NLKY), and 1270–1303 (GAKA…EKET).

The protein belongs to the CLU family.

It is found in the cytoplasm. Functionally, mRNA-binding protein involved in proper cytoplasmic distribution of mitochondria. This Drosophila willistoni (Fruit fly) protein is Protein clueless.